Here is a 103-residue protein sequence, read N- to C-terminus: Photosystem II 5 kDa protein, chloroplastic (103 aa).

The N-terminal 75 residues, 1-75 (MASMTMTATF…LAKVAMAEEE (75 aa)), are a transit peptide targeting the chloroplast.

The maturation of the PSII-T precursor to its final form occurs through a two step process. First, a stromal intermediate is formed, which, upon translocation into the thylakoid membrane, is processed to the mature protein.

Its subcellular location is the plastid. The protein localises to the chloroplast thylakoid membrane. Its function is as follows. May be a component of the oxygen-evolving complex. This chain is Photosystem II 5 kDa protein, chloroplastic (PSBT), found in Arabidopsis thaliana (Mouse-ear cress).